A 364-amino-acid polypeptide reads, in one-letter code: Melatonin receptor type 1B (364 aa).

Positions 1 to 28 (MPDNSSIANCCAASGLAARPSWPGSAEA) are cleaved as a signal peptide. The Extracellular segment spans residues 29-45 (EPPETPRAPWVAPMLST). The helical transmembrane segment at 46 to 66 (VVIVTTAVDFVGNLLVILSVL) threads the bilayer. Residues 67–81 (RNRKLRNAGNLFVVN) are Cytoplasmic-facing. A helical membrane pass occupies residues 82–102 (LALADLVVALYPYPLILVAIL). Topologically, residues 103 to 115 (HDGWVLGEIHCKA) are extracellular. Residues Cys113 and Cys190 are joined by a disulfide bond. A helical membrane pass occupies residues 116-136 (SAFVMGLSVIGSVFNITAIAI). The Cytoplasmic portion of the chain corresponds to 137-158 (NRYWCICHSATYHRACSQWHAP). A helical membrane pass occupies residues 159–179 (LYISLIWLLTLVALVPNFFVG). Residues 180–200 (SLEYDPRIYSCTFIQTASTQY) are Extracellular-facing. A helical membrane pass occupies residues 201–221 (TMAVVAIHFLLPIAVVSFCYL). Residues 222–255 (RIWILVLQARRKAKAERKLRLRPSDLRSFLTMFA) are Cytoplasmic-facing. A helical transmembrane segment spans residues 256-276 (VFVVFAICWAPLNCIGLAVAI). Topologically, residues 277–287 (NPEAMALQIPE) are extracellular. Residues 288–308 (GLFVTSYFLAYFNSCLNAIVY) form a helical membrane-spanning segment. Residues 309–364 (GLLNQNFRREYKRILSALWSTGRCFHDASKCHLTEDLQGPVPPAAMATIPVQEGAL) are Cytoplasmic-facing.

Belongs to the G-protein coupled receptor 1 family. Expressed in the hippocampus, kidney, and ovary.

The protein localises to the cell membrane. Functionally, high affinity receptor for melatonin. The activity of this receptor is mediated by pertussis toxin sensitive G proteins that inhibits adenylate cyclase activity. The chain is Melatonin receptor type 1B from Rattus norvegicus (Rat).